The chain runs to 326 residues: MSNDKSAEVVVLPRENDEESKEPVLKNQFDLSTFDIDSPEIDLTHTRADHIPDLTGFPKIEELRMRNNLLVSISPTISSLVTLTSLDLYENQLTEISHLESLVNLVSLDLSYNRIRQINGLDKLTKLETLYLVSNKIEKIENLEALTQLKLLELGDNRIKKIENIGHLVNLDELFIGKNKIRQLEGVETLQKLSVLSLPGNRIVKIENVEQLNNLKELYLSDQGLQDIHGVEPLTNLLLLDVANNEIKTFSGVERLESLNDFWANDNKVESFSEIEQLSKLKGLQTVYLERNPFYFNDTNQYRRKVMMTLTQVTQIDATTCRKPIE.

The interval 1–22 (MSNDKSAEVVVLPRENDEESKE) is disordered. LRR repeat units lie at residues 35 to 57 (DIDSPEIDLTHTRADHIPDLTGF), 58 to 80 (PKIEELRMRNNLLVSISPTISSL), 81 to 102 (VTLTSLDLYENQLTEISHLESL), 103 to 126 (VNLVSLDLSYNRIRQINGLDKLTK), 128 to 146 (ETLYLVSNKIEKIENLEAL), 147 to 170 (TQLKLLELGDNRIKKIENIGHLVN), 172 to 190 (DELFIGKNKIRQLEGVETL), 191 to 212 (QKLSVLSLPGNRIVKIENVEQL), 213 to 236 (NNLKELYLSDQGLQDIHGVEPLTN), 238 to 256 (LLLDVANNEIKTFSGVERL), 257 to 280 (ESLNDFWANDNKVESFSEIEQLSK), and 281 to 304 (LKGLQTVYLERNPFYFNDTNQYRR).

The protein belongs to the SDS22 family.

It localises to the nucleus. Functionally, regulatory subunit of protein phosphatase 1. This chain is Protein phosphatase 1 regulatory subunit SDS22 homolog (sds-22), found in Caenorhabditis elegans.